Consider the following 1495-residue polypeptide: MEENRRNPSAGMEVPVAGGGNVVKWIEISVPSPSVSSSSIGANSSEDNECVQLPLSEDYASSSVIGEPSISFVWRINKTSPNALELLQLSAKSGFPITGLRFVFAQTLSPFAFVYADEGGDSGRLVYFLYSLTPSGVVYVLKLSNTLAYKSGSVFPLDHLIHLDVRPYLNESRVTSVAASPGFIFLGRSDGCVSCFQPIVYFQKSSGFHQELRDDTGFGRLGTVVAAVQDLFISEVHGRNYLCVLHADGALRVWDILTYSRVLCQSIAAKNLEGVMCVRLWLGKADYDSGIIPLAVLYRKSMNDSMDVITVYGLHFSSAEGIALSLDSGLQNIPLEEGELRDVRFTSDKIWTLKANELTSYMLCQKSSTMEAQSYTLQEDYISEQLFLSSRSSSHDLLLTTHSLFSSAKDQIMGFISSIFLRRLLCPGIFHNVALRLTLLDHNKNWTDSEFQSLSLDELTSEILLLVEHEVTAETSISVFHWWKNFCTSYLHHWCSNNEPRTLLVQSDVIGLVRNNSVSLFFRLENAEHSLGGSSSEHSNLTSLDLGVSHSDHEILAEVLRCTSKISKQWGGAPYAMYYESITGRPIISSDEIVPRLVNILESGYSTTIGQRTWSDLGADRAWEKELEAHKNLRTFSIDMLLSLSALCQRAGSWEKVFTIMEHYLQYLVPKKSMQKNDGEALSDICSSILVQATSQFVKVMFESAFDIFLLISYLLNIAGQVNMSQQDICKLRLELLPMIQDIVSEWLIILFFVTTPAESTSMEDFSLKLSSLQIDSSIDKRSWNAMLGKCGFSLAFILLFSDRSCIVDGRFNLRYLPSSQIITSLVQNFISWIRYSKTGDDSSSLLRRSTELSLRLIRNGQSDAVERILVVVEASLRGEKTFGCSQDTSGDWCLLQHLRGCCLLDQVQRGASGILRERKIIDAIRCFFRASSGEGSWKALHSLSKEAGFSPATTGPSILDGSTSSAAWKLHYYEWAMQIFERYNISEGACQFAYAALEQVDDAYNFIEMTEEFDPTKAATYTRGRLWANVFKFTLDLNLLNDAYCAIISNPDEEIKRICLRRFIIVLFECGKTKILSDGHLPFIGLTEKITQELFWKAGRSDIMMKPNPYKLLYAYEMRRHNWRMAASYMYQFSARLRSEGACKDYKHMSLVLQERLNGLSAAMNALALVHPGYAWIDPVPEETTRYPVKKARRAEEEQLRSNDQPKGEKSCIDIEKLQNEFVFTTAEYMLSLKNFGWTYSGLEKPPSDLVDLLVQANLYDMAFTVVLKFWRGSALKRELEKIFENMAIKCCPAKGTLWSSPNLMLTSNDEEVTHSPDRSPADQGSKLAGDWEILEVYLKRYIDIHARLPVSVASTLLQADSCIELPLWLIQMFKDGQKEKALGMAGQEASPASLFQLYVDYGRLTEATNLLLEYMESFASSKPAEVLKRKKVSGVWFPYTTVERLWWELEKTMNSGRMVEQCHKLKEQLHHALLNHLKLLKVDSNDAVSSATG.

Part of the nuclear pore complex (NPC). The NPC has an eight-fold symmetrical structure comprising a central transport channel and two rings, the cytoplasmic and nuclear rings, to which eight filaments are attached. The cytoplasmic filaments have loose ends, while the nuclear filaments are joined in a distal ring, forming a nuclear basket. NPCs are highly dynamic in configuration and composition, and can be devided in 3 subcomplexes, the NUP62 subcomplex, the NUP107-160 subcomplex and the NUP93 subcomplex, containing approximately 30 different nucleoporin proteins. In terms of tissue distribution, expressed in roots, stems, anthers, siliques and vascular tissues of cotyledons, leaves and hypocotyls.

The protein resides in the nucleus membrane. Its subcellular location is the nucleus. The protein localises to the nuclear pore complex. Contributes to the transfer of mature mRNA from the nucleus to the cytosol. Required for both R gene-mediated and basal disease resistance. RNA export seems to play a critical role in stress responses and regulation of plant growth and development. Required for proper expression of factors associated with auxin signaling. This Arabidopsis thaliana (Mouse-ear cress) protein is Nuclear pore complex protein NUP160.